The chain runs to 655 residues: D-xylonate dehydratase YjhG (655 aa).

The protein belongs to the IlvD/Edd family.

The catalysed reaction is D-xylonate = 2-dehydro-3-deoxy-D-arabinonate + H2O. With respect to regulation, activity is increased in the presence of Mn(+) and Mg(2+). Inhibited by thiol compounds. Catalyzes the dehydration of D-xylonic acid to form 2-dehydro-3-deoxy-D-pentonate. The protein is D-xylonate dehydratase YjhG (yjhG) of Escherichia coli (strain K12).